The sequence spans 1339 residues: DNA-directed RNA polymerase subunit beta'' (1339 aa).

Residues Cys-226, Cys-299, Cys-306, and Cys-309 each coordinate Zn(2+).

This sequence belongs to the RNA polymerase beta' chain family. RpoC2 subfamily. In terms of assembly, in plastids the minimal PEP RNA polymerase catalytic core is composed of four subunits: alpha, beta, beta', and beta''. When a (nuclear-encoded) sigma factor is associated with the core the holoenzyme is formed, which can initiate transcription. It depends on Zn(2+) as a cofactor.

It is found in the plastid. It localises to the chloroplast. It carries out the reaction RNA(n) + a ribonucleoside 5'-triphosphate = RNA(n+1) + diphosphate. Functionally, DNA-dependent RNA polymerase catalyzes the transcription of DNA into RNA using the four ribonucleoside triphosphates as substrates. In Cycas taitungensis (Prince sago), this protein is DNA-directed RNA polymerase subunit beta''.